The following is a 396-amino-acid chain: Cytochrome b (396 aa).

4 helical membrane passes run 37-57, 81-102, 117-137, and 182-202; these read FGSL…ILAM, WLMR…YAHI, WNVG…GYVL, and FFTF…IHIM. Residues His-87 and His-101 each coordinate heme b. His-186 and His-200 together coordinate heme b. Residue His-205 coordinates a ubiquinone. The next 4 membrane-spanning stretches (helical) occupy residues 230–250, 292–312, 324–344, and 351–371; these read FKDI…SLLP, LGGV…PFTH, LAQV…WLGG, and FILM…LIFP.

Belongs to the cytochrome b family. The cytochrome bc1 complex contains 3 respiratory subunits (MT-CYB, CYC1 and UQCRFS1), 2 core proteins (UQCRC1 and UQCRC2) and probably 6 low-molecular weight proteins. Heme b is required as a cofactor.

It localises to the mitochondrion inner membrane. Its function is as follows. Component of the ubiquinol-cytochrome c reductase complex (complex III or cytochrome b-c1 complex) that is part of the mitochondrial respiratory chain. The b-c1 complex mediates electron transfer from ubiquinol to cytochrome c. Contributes to the generation of a proton gradient across the mitochondrial membrane that is then used for ATP synthesis. The sequence is that of Cytochrome b (mt-cyb) from Lampetra fluviatilis (European river lamprey).